The sequence spans 834 residues: Glycerol-3-phosphate acyltransferase (834 aa).

An HXXXXD motif motif is present at residues 309 to 314 (CHRSHI).

The protein belongs to the GPAT/DAPAT family.

It is found in the cell inner membrane. The enzyme catalyses sn-glycerol 3-phosphate + an acyl-CoA = a 1-acyl-sn-glycero-3-phosphate + CoA. Its pathway is phospholipid metabolism; CDP-diacylglycerol biosynthesis; CDP-diacylglycerol from sn-glycerol 3-phosphate: step 1/3. In Pseudomonas aeruginosa (strain LESB58), this protein is Glycerol-3-phosphate acyltransferase.